Here is an 84-residue protein sequence, read N- to C-terminus: Small ribosomal subunit protein uS17 (84 aa).

It belongs to the universal ribosomal protein uS17 family. As to quaternary structure, part of the 30S ribosomal subunit.

Functionally, one of the primary rRNA binding proteins, it binds specifically to the 5'-end of 16S ribosomal RNA. This is Small ribosomal subunit protein uS17 from Yersinia enterocolitica serotype O:8 / biotype 1B (strain NCTC 13174 / 8081).